Consider the following 943-residue polypeptide: Lysine-specific demethylase JMJ21 (943 aa).

Residues leucine 14–leucine 60 form the F-box domain. The JmjC domain occupies glutamate 216–tyrosine 379. Fe cation contacts are provided by histidine 262, aspartate 264, and histidine 347. Over residues asparagine 396–asparagine 410 the composition is skewed to acidic residues. The interval asparagine 396–aspartate 438 is disordered.

The protein belongs to the JARID1 histone demethylase family. Fe(2+) is required as a cofactor. Mostly expressed in leaves, and, to a lower extent, in inflorescences, roots, siliques and stems.

It is found in the nucleus. Functionally, may function as histone H3 lysine demethylase and be involved in regulation of gene expression. This Arabidopsis thaliana (Mouse-ear cress) protein is Lysine-specific demethylase JMJ21.